Here is a 417-residue protein sequence, read N- to C-terminus: Gamma-glutamyl phosphate reductase (417 aa).

This sequence belongs to the gamma-glutamyl phosphate reductase family.

Its subcellular location is the cytoplasm. It carries out the reaction L-glutamate 5-semialdehyde + phosphate + NADP(+) = L-glutamyl 5-phosphate + NADPH + H(+). It functions in the pathway amino-acid biosynthesis; L-proline biosynthesis; L-glutamate 5-semialdehyde from L-glutamate: step 2/2. Its function is as follows. Catalyzes the NADPH-dependent reduction of L-glutamate 5-phosphate into L-glutamate 5-semialdehyde and phosphate. The product spontaneously undergoes cyclization to form 1-pyrroline-5-carboxylate. This Phocaeicola vulgatus (strain ATCC 8482 / DSM 1447 / JCM 5826 / CCUG 4940 / NBRC 14291 / NCTC 11154) (Bacteroides vulgatus) protein is Gamma-glutamyl phosphate reductase.